The sequence spans 339 residues: Phosphate acyltransferase (339 aa).

This sequence belongs to the PlsX family. In terms of assembly, homodimer. Probably interacts with PlsY.

The protein localises to the cytoplasm. The catalysed reaction is a fatty acyl-[ACP] + phosphate = an acyl phosphate + holo-[ACP]. It functions in the pathway lipid metabolism; phospholipid metabolism. In terms of biological role, catalyzes the reversible formation of acyl-phosphate (acyl-PO(4)) from acyl-[acyl-carrier-protein] (acyl-ACP). This enzyme utilizes acyl-ACP as fatty acyl donor, but not acyl-CoA. The sequence is that of Phosphate acyltransferase from Clostridium perfringens (strain ATCC 13124 / DSM 756 / JCM 1290 / NCIMB 6125 / NCTC 8237 / Type A).